We begin with the raw amino-acid sequence, 183 residues long: dTTP/UTP pyrophosphatase (183 aa).

Catalysis depends on aspartate 64, which acts as the Proton acceptor.

Belongs to the Maf family. YhdE subfamily. A divalent metal cation is required as a cofactor.

It is found in the cytoplasm. It catalyses the reaction dTTP + H2O = dTMP + diphosphate + H(+). It carries out the reaction UTP + H2O = UMP + diphosphate + H(+). Functionally, nucleoside triphosphate pyrophosphatase that hydrolyzes dTTP and UTP. May have a dual role in cell division arrest and in preventing the incorporation of modified nucleotides into cellular nucleic acids. The polypeptide is dTTP/UTP pyrophosphatase (Acinetobacter baylyi (strain ATCC 33305 / BD413 / ADP1)).